We begin with the raw amino-acid sequence, 240 residues long: Tetrahydromethanopterin S-methyltransferase subunit A (240 aa).

The Cytoplasmic segment spans residues 1–218 (MVDKKEPASG…KFHSGVHAGK (218 aa)). Histidine 85 lines the 5-hydroxybenzimidazolylcob(I)amide pocket. The helical transmembrane segment at 219-239 (IEGAMIGLTVTISLLGLLLLG) threads the bilayer. Residue arginine 240 is a topological domain, extracellular.

It belongs to the MtrA family. In terms of assembly, the complex is composed of 8 subunits; MtrA, MtrB, MtrC, MtrD, MtrE, MtrF, MtrG and MtrH. Requires 5-hydroxybenzimidazolylcob(I)amide as cofactor.

Its subcellular location is the cell membrane. The enzyme catalyses 5-methyl-5,6,7,8-tetrahydromethanopterin + coenzyme M + 2 Na(+)(in) = 5,6,7,8-tetrahydromethanopterin + methyl-coenzyme M + 2 Na(+)(out). Its pathway is one-carbon metabolism; methanogenesis from CO(2); methyl-coenzyme M from 5,10-methylene-5,6,7,8-tetrahydromethanopterin: step 2/2. Functionally, part of a complex that catalyzes the formation of methyl-coenzyme M and tetrahydromethanopterin from coenzyme M and methyl-tetrahydromethanopterin. This is an energy-conserving, sodium-ion translocating step. This chain is Tetrahydromethanopterin S-methyltransferase subunit A, found in Methanosarcina acetivorans (strain ATCC 35395 / DSM 2834 / JCM 12185 / C2A).